Reading from the N-terminus, the 168-residue chain is Group IIF secretory phospholipase A2 (168 aa).

The N-terminal stretch at 1-20 (MKKFFTVAILAGSVLSTAHG) is a signal peptide. 7 disulfide bridges follow: cysteine 46-cysteine 138, cysteine 48-cysteine 64, cysteine 63-cysteine 120, cysteine 69-cysteine 145, cysteine 70-cysteine 113, cysteine 79-cysteine 106, and cysteine 98-cysteine 111. Tyrosine 47, glycine 49, and glycine 51 together coordinate Ca(2+). Residue histidine 67 is part of the active site. A Ca(2+)-binding site is contributed by aspartate 68. N-linked (GlcNAc...) asparagine glycans are attached at residues asparagine 92 and asparagine 102. Residue aspartate 114 is part of the active site. Residues asparagine 123 and asparagine 144 are each glycosylated (N-linked (GlcNAc...) asparagine). A required for localization on the plasma membrane region spans residues 139–168 (QGPTPNCSIYEPPPEEVTCSHQSPAPPAPP).

The protein belongs to the phospholipase A2 family. Ca(2+) is required as a cofactor. As to expression, expressed at high levels in placenta, testis, thymus and at lower levels in heart, kidney, liver and prostate. Highly expressed in rheumatoid arthritic tissues, including synovial lining cells in the intima, capillary endothelial cells and plasma cells.

Its subcellular location is the secreted. It localises to the cell membrane. The enzyme catalyses a 1,2-diacyl-sn-glycero-3-phosphocholine + H2O = a 1-acyl-sn-glycero-3-phosphocholine + a fatty acid + H(+). It carries out the reaction 1-hexadecanoyl-2-(9Z-octadecenoyl)-sn-glycero-3-phospho-(1'-sn-glycerol) + H2O = 1-hexadecanoyl-sn-glycero-3-phospho-(1'-sn-glycerol) + (9Z)-octadecenoate + H(+). The catalysed reaction is 1-hexadecanoyl-2-(9Z,12Z-octadecadienoyl)-sn-glycero-3-phosphoethanolamine + H2O = 1-hexadecanoyl-sn-glycero-3-phosphoethanolamine + (9Z,12Z)-octadecadienoate + H(+). It catalyses the reaction 1-hexadecanoyl-2-(5Z,8Z,11Z,14Z-eicosatetraenoyl)-sn-glycero-3-phosphoethanolamine + H2O = 1-hexadecanoyl-sn-glycero-3-phosphoethanolamine + (5Z,8Z,11Z,14Z)-eicosatetraenoate + H(+). The enzyme catalyses 1-hexadecanoyl-2-(9Z-octadecenoyl)-sn-glycero-3-phosphocholine + H2O = 1-hexadecanoyl-sn-glycero-3-phosphocholine + (9Z)-octadecenoate + H(+). It carries out the reaction 1-hexadecanoyl-2-(9Z-octadecenoyl)-sn-glycero-3-phospho-L-serine + H2O = 1-hexadecanoyl-sn-glycero-3-phospho-L-serine + (9Z)-octadecenoate + H(+). Functionally, secretory calcium-dependent phospholipase A2 that primarily targets extracellular phospholipids. Hydrolyzes the ester bond of the fatty acyl group attached at the sn-2 position of phospholipids (phospholipase A2 activity), the catalytic efficiency decreasing in the following order: phosphatidylglycerols &gt; phosphatidylethanolamines &gt; phosphatidylcholines &gt; phosphatidylserines. May play a role in lipid mediator production in inflammatory conditions, by providing arachidonic acid to downstream cyclooxygenases and lipoxygenases. This Homo sapiens (Human) protein is Group IIF secretory phospholipase A2 (PLA2G2F).